A 121-amino-acid polypeptide reads, in one-letter code: Large ribosomal subunit protein bL19 (121 aa).

It belongs to the bacterial ribosomal protein bL19 family.

This protein is located at the 30S-50S ribosomal subunit interface and may play a role in the structure and function of the aminoacyl-tRNA binding site. The chain is Large ribosomal subunit protein bL19 from Chlamydia trachomatis serovar L2 (strain ATCC VR-902B / DSM 19102 / 434/Bu).